The primary structure comprises 713 residues: Polyribonucleotide nucleotidyltransferase (713 aa).

Mg(2+)-binding residues include aspartate 498 and aspartate 504. Residues 565–631 (PRILSLKVPV…RIEDLTREAK (67 aa)) enclose the KH domain. Positions 633 to 701 (GEIYEGTVTR…ERGKIDLIRP (69 aa)) constitute an S1 motif domain.

This sequence belongs to the polyribonucleotide nucleotidyltransferase family. The cofactor is Mg(2+).

The protein localises to the cytoplasm. It carries out the reaction RNA(n+1) + phosphate = RNA(n) + a ribonucleoside 5'-diphosphate. Functionally, involved in mRNA degradation. Catalyzes the phosphorolysis of single-stranded polyribonucleotides processively in the 3'- to 5'-direction. This chain is Polyribonucleotide nucleotidyltransferase, found in Thermus thermophilus (strain ATCC 27634 / DSM 579 / HB8).